We begin with the raw amino-acid sequence, 459 residues long: Cysteine--tRNA ligase (459 aa).

A Zn(2+)-binding site is contributed by Cys28. A 'HIGH' region motif is present at residues Ile30–His40. The Zn(2+) site is built by Cys209, His234, and Glu238. A 'KMSKS' region motif is present at residues Lys266–Ser270. Lys269 provides a ligand contact to ATP.

It belongs to the class-I aminoacyl-tRNA synthetase family. In terms of assembly, monomer. The cofactor is Zn(2+).

Its subcellular location is the cytoplasm. It catalyses the reaction tRNA(Cys) + L-cysteine + ATP = L-cysteinyl-tRNA(Cys) + AMP + diphosphate. This chain is Cysteine--tRNA ligase, found in Pseudoalteromonas translucida (strain TAC 125).